The primary structure comprises 206 residues: Ribosomal RNA large subunit methyltransferase E (206 aa).

G60, W62, D80, D96, and D121 together coordinate S-adenosyl-L-methionine. K161 (proton acceptor) is an active-site residue.

This sequence belongs to the class I-like SAM-binding methyltransferase superfamily. RNA methyltransferase RlmE family.

Its subcellular location is the cytoplasm. The catalysed reaction is uridine(2552) in 23S rRNA + S-adenosyl-L-methionine = 2'-O-methyluridine(2552) in 23S rRNA + S-adenosyl-L-homocysteine + H(+). Functionally, specifically methylates the uridine in position 2552 of 23S rRNA at the 2'-O position of the ribose in the fully assembled 50S ribosomal subunit. This chain is Ribosomal RNA large subunit methyltransferase E, found in Hahella chejuensis (strain KCTC 2396).